The following is a 648-amino-acid chain: Replication restart protein PriA (648 aa).

The Helicase ATP-binding domain maps to 131–297 (TIFNESNKPT…KTHKYQLVTL (167 aa)). 144 to 151 (GVTGSGKT) contributes to the ATP binding site. Residues 240–243 (DEEH) carry the DEAH box motif. The Zn(2+) site is built by cysteine 358, cysteine 361, cysteine 367, cysteine 370, cysteine 385, cysteine 388, cysteine 398, and cysteine 401. The region spanning 393–548 (KIFSSCPECL…SFFTNELEIR (156 aa)) is the Helicase C-terminal domain.

This sequence belongs to the helicase family. PriA subfamily. Component of the replication restart primosome. It depends on Zn(2+) as a cofactor.

It catalyses the reaction Couples ATP hydrolysis with the unwinding of duplex DNA by translocating in the 3'-5' direction.. The catalysed reaction is ATP + H2O = ADP + phosphate + H(+). Functionally, initiates the restart of stalled replication forks, which reloads the replicative helicase on sites other than the origin of replication. Recognizes and binds to abandoned replication forks and remodels them to uncover a helicase loading site. Promotes assembly of the primosome at these replication forks. In Rickettsia typhi (strain ATCC VR-144 / Wilmington), this protein is Replication restart protein PriA.